Consider the following 477-residue polypeptide: Glycogen synthase (477 aa).

Lysine 15 provides a ligand contact to ADP-alpha-D-glucose.

The protein belongs to the glycosyltransferase 1 family. Bacterial/plant glycogen synthase subfamily.

It carries out the reaction [(1-&gt;4)-alpha-D-glucosyl](n) + ADP-alpha-D-glucose = [(1-&gt;4)-alpha-D-glucosyl](n+1) + ADP + H(+). The protein operates within glycan biosynthesis; glycogen biosynthesis. Its function is as follows. Synthesizes alpha-1,4-glucan chains using ADP-glucose. The protein is Glycogen synthase of Clostridium acetobutylicum (strain ATCC 824 / DSM 792 / JCM 1419 / IAM 19013 / LMG 5710 / NBRC 13948 / NRRL B-527 / VKM B-1787 / 2291 / W).